The primary structure comprises 291 residues: uncharacterized protein (291 aa).

In terms of domain architecture, HTH tetR-type spans 2–62 (KEKEKLIIET…SMLNYYYDKT (61 aa)). A DNA-binding region (H-T-H motif) is located at residues 25-44 (SVQEIAKECKISKGAFYIYF).

This is an uncharacterized protein from Bacillus subtilis (strain 168).